Here is a 238-residue protein sequence, read N- to C-terminus: Orotidine 5'-phosphate decarboxylase (238 aa).

Residues Asp-10, Lys-32, 59–68 (DLKLHDIPNT), Thr-122, Arg-184, Gln-193, Gly-213, and Arg-214 contribute to the substrate site. Lys-61 acts as the Proton donor in catalysis.

This sequence belongs to the OMP decarboxylase family. Type 1 subfamily. As to quaternary structure, homodimer.

It carries out the reaction orotidine 5'-phosphate + H(+) = UMP + CO2. It functions in the pathway pyrimidine metabolism; UMP biosynthesis via de novo pathway; UMP from orotate: step 2/2. Its function is as follows. Catalyzes the decarboxylation of orotidine 5'-monophosphate (OMP) to uridine 5'-monophosphate (UMP). The protein is Orotidine 5'-phosphate decarboxylase of Bacillus anthracis (strain A0248).